Reading from the N-terminus, the 220-residue chain is Deoxyribose-phosphate aldolase (220 aa).

Aspartate 89 functions as the Proton donor/acceptor in the catalytic mechanism. The Schiff-base intermediate with acetaldehyde role is filled by lysine 151. The Proton donor/acceptor role is filled by lysine 180.

The protein belongs to the DeoC/FbaB aldolase family. DeoC type 1 subfamily.

It is found in the cytoplasm. It carries out the reaction 2-deoxy-D-ribose 5-phosphate = D-glyceraldehyde 3-phosphate + acetaldehyde. The protein operates within carbohydrate degradation; 2-deoxy-D-ribose 1-phosphate degradation; D-glyceraldehyde 3-phosphate and acetaldehyde from 2-deoxy-alpha-D-ribose 1-phosphate: step 2/2. Catalyzes a reversible aldol reaction between acetaldehyde and D-glyceraldehyde 3-phosphate to generate 2-deoxy-D-ribose 5-phosphate. The polypeptide is Deoxyribose-phosphate aldolase (Streptococcus uberis (strain ATCC BAA-854 / 0140J)).